A 550-amino-acid polypeptide reads, in one-letter code: Protein UshA (550 aa).

The N-terminal stretch at 1 to 25 is a signal peptide; the sequence is MKFLKRGVALALLAAFALTTQPAQA. Aspartate 41, histidine 43, aspartate 84, asparagine 116, histidine 217, histidine 252, and glutamine 254 together coordinate Zn(2+). Cysteine 258 and cysteine 275 are joined by a disulfide. Residues phenylalanine 429 and 498 to 504 contribute to the substrate site; that span reads FNATGGD.

Belongs to the 5'-nucleotidase family. Monomer. Zn(2+) serves as cofactor.

It localises to the periplasm. The enzyme catalyses UDP-sugar + H2O = UMP + alpha-D-aldose 1-phosphate.. The catalysed reaction is a ribonucleoside 5'-phosphate + H2O = a ribonucleoside + phosphate. Its function is as follows. Degradation of external UDP-glucose to uridine monophosphate and glucose-1-phosphate, which can then be used by the cell. The sequence is that of Protein UshA (ushA) from Salmonella pullorum.